Reading from the N-terminus, the 66-residue chain is Large ribosomal subunit protein bL35 (66 aa).

Residues 21 to 40 are disordered; the sequence is KIKSTQSAKRHGMTKRSKRS. The span at 28 to 40 shows a compositional bias: basic residues; it reads AKRHGMTKRSKRS.

Belongs to the bacterial ribosomal protein bL35 family.

This is Large ribosomal subunit protein bL35 from Ehrlichia canis (strain Jake).